A 353-amino-acid polypeptide reads, in one-letter code: Photosystem II protein D1 (353 aa).

T2 is modified (N-acetylthreonine). The residue at position 2 (T2) is a Phosphothreonine. 3 helical membrane passes run 29–46, 118–133, and 142–156; these read YIGW…TATS, HFLL…EWEL, and WIAV…AATA. H118 provides a ligand contact to chlorophyll a. Y126 is a binding site for pheophytin a. [CaMn4O5] cluster contacts are provided by D170 and E189. Residues 197-218 form a helical membrane-spanning segment; sequence FHMLGVAGVFGGSLFSAMHGSL. H198 contributes to the chlorophyll a binding site. A quinone is bound by residues H215 and 264-265; that span reads SF. Residue H215 participates in Fe cation binding. H272 contacts Fe cation. The helical transmembrane segment at 274 to 288 threads the bilayer; the sequence is FLAAWPVVGIWFTAL. Residues H332, E333, D342, and A344 each contribute to the [CaMn4O5] cluster site. Positions 345–353 are excised as a propeptide; that stretch reads AVEVPAING.

The protein belongs to the reaction center PufL/M/PsbA/D family. In terms of assembly, PSII is composed of 1 copy each of membrane proteins PsbA, PsbB, PsbC, PsbD, PsbE, PsbF, PsbH, PsbI, PsbJ, PsbK, PsbL, PsbM, PsbT, PsbX, PsbY, PsbZ, Psb30/Ycf12, at least 3 peripheral proteins of the oxygen-evolving complex and a large number of cofactors. It forms dimeric complexes. The D1/D2 heterodimer binds P680, chlorophylls that are the primary electron donor of PSII, and subsequent electron acceptors. It shares a non-heme iron and each subunit binds pheophytin, quinone, additional chlorophylls, carotenoids and lipids. D1 provides most of the ligands for the Mn4-Ca-O5 cluster of the oxygen-evolving complex (OEC). There is also a Cl(-1) ion associated with D1 and D2, which is required for oxygen evolution. The PSII complex binds additional chlorophylls, carotenoids and specific lipids. is required as a cofactor. Tyr-161 forms a radical intermediate that is referred to as redox-active TyrZ, YZ or Y-Z. In terms of processing, C-terminally processed by CTPA; processing is essential to allow assembly of the oxygen-evolving complex and thus photosynthetic growth.

It localises to the plastid. The protein localises to the chloroplast thylakoid membrane. It carries out the reaction 2 a plastoquinone + 4 hnu + 2 H2O = 2 a plastoquinol + O2. Functionally, photosystem II (PSII) is a light-driven water:plastoquinone oxidoreductase that uses light energy to abstract electrons from H(2)O, generating O(2) and a proton gradient subsequently used for ATP formation. It consists of a core antenna complex that captures photons, and an electron transfer chain that converts photonic excitation into a charge separation. The D1/D2 (PsbA/PsbD) reaction center heterodimer binds P680, the primary electron donor of PSII as well as several subsequent electron acceptors. This chain is Photosystem II protein D1, found in Hordeum vulgare (Barley).